A 163-amino-acid polypeptide reads, in one-letter code: Crossover junction endodeoxyribonuclease RuvC (163 aa).

Residues aspartate 8, glutamate 68, and aspartate 140 contribute to the active site. 3 residues coordinate Mg(2+): aspartate 8, glutamate 68, and aspartate 140.

Belongs to the RuvC family. As to quaternary structure, homodimer which binds Holliday junction (HJ) DNA. The HJ becomes 2-fold symmetrical on binding to RuvC with unstacked arms; it has a different conformation from HJ DNA in complex with RuvA. In the full resolvosome a probable DNA-RuvA(4)-RuvB(12)-RuvC(2) complex forms which resolves the HJ. Mg(2+) serves as cofactor.

Its subcellular location is the cytoplasm. It catalyses the reaction Endonucleolytic cleavage at a junction such as a reciprocal single-stranded crossover between two homologous DNA duplexes (Holliday junction).. The RuvA-RuvB-RuvC complex processes Holliday junction (HJ) DNA during genetic recombination and DNA repair. Endonuclease that resolves HJ intermediates. Cleaves cruciform DNA by making single-stranded nicks across the HJ at symmetrical positions within the homologous arms, yielding a 5'-phosphate and a 3'-hydroxyl group; requires a central core of homology in the junction. The consensus cleavage sequence is 5'-(A/T)TT(C/G)-3'. Cleavage occurs on the 3'-side of the TT dinucleotide at the point of strand exchange. HJ branch migration catalyzed by RuvA-RuvB allows RuvC to scan DNA until it finds its consensus sequence, where it cleaves and resolves the cruciform DNA. The protein is Crossover junction endodeoxyribonuclease RuvC of Erythrobacter litoralis (strain HTCC2594).